Here is a 365-residue protein sequence, read N- to C-terminus: Phospho-N-acetylmuramoyl-pentapeptide-transferase (365 aa).

10 helical membrane-spanning segments follow: residues 22-42 (YISVRIIMISITSLLITLALG), 74-94 (TMGGVLILSSVIISCLLWGDL), 95-115 (TSIYLWILILVVIFFGAIGFF), 134-154 (KFALQSIFSIVLAIVLFYLLS), 168-188 (SLYIPMGIVIFVVLAFFIING), 201-221 (GLAIVPVVLVAAGLGIYAYIE), 240-260 (LAEVAVFCAAVCGSGLAFLWF), 267-287 (VFMGDVGSLTLGAVLGVIAVM), 292-312 (LIFFIMGLLFVVEALSVMLQV), and 342-362 (KVVIRFWIISLILFLIGLAAI).

The protein belongs to the glycosyltransferase 4 family. MraY subfamily. Requires Mg(2+) as cofactor.

The protein resides in the cell inner membrane. It carries out the reaction UDP-N-acetyl-alpha-D-muramoyl-L-alanyl-gamma-D-glutamyl-meso-2,6-diaminopimeloyl-D-alanyl-D-alanine + di-trans,octa-cis-undecaprenyl phosphate = di-trans,octa-cis-undecaprenyl diphospho-N-acetyl-alpha-D-muramoyl-L-alanyl-D-glutamyl-meso-2,6-diaminopimeloyl-D-alanyl-D-alanine + UMP. It participates in cell wall biogenesis; peptidoglycan biosynthesis. Functionally, catalyzes the initial step of the lipid cycle reactions in the biosynthesis of the cell wall peptidoglycan: transfers peptidoglycan precursor phospho-MurNAc-pentapeptide from UDP-MurNAc-pentapeptide onto the lipid carrier undecaprenyl phosphate, yielding undecaprenyl-pyrophosphoryl-MurNAc-pentapeptide, known as lipid I. This Francisella tularensis subsp. mediasiatica (strain FSC147) protein is Phospho-N-acetylmuramoyl-pentapeptide-transferase.